The sequence spans 530 residues: Bifunctional purine biosynthesis protein PurH (530 aa).

One can recognise an MGS-like domain in the interval 1–148; the sequence is MNNARPIHRA…KNHKDVAIVV (148 aa).

The protein belongs to the PurH family.

The catalysed reaction is (6R)-10-formyltetrahydrofolate + 5-amino-1-(5-phospho-beta-D-ribosyl)imidazole-4-carboxamide = 5-formamido-1-(5-phospho-D-ribosyl)imidazole-4-carboxamide + (6S)-5,6,7,8-tetrahydrofolate. It catalyses the reaction IMP + H2O = 5-formamido-1-(5-phospho-D-ribosyl)imidazole-4-carboxamide. Its pathway is purine metabolism; IMP biosynthesis via de novo pathway; 5-formamido-1-(5-phospho-D-ribosyl)imidazole-4-carboxamide from 5-amino-1-(5-phospho-D-ribosyl)imidazole-4-carboxamide (10-formyl THF route): step 1/1. It participates in purine metabolism; IMP biosynthesis via de novo pathway; IMP from 5-formamido-1-(5-phospho-D-ribosyl)imidazole-4-carboxamide: step 1/1. The protein is Bifunctional purine biosynthesis protein PurH of Vibrio cholerae serotype O1 (strain ATCC 39541 / Classical Ogawa 395 / O395).